A 98-amino-acid polypeptide reads, in one-letter code: PsbF-like protein (98 aa).

2 helical membrane passes run 5–25 and 73–93; these read VLLV…WLGK and TAAV…ILAM.

The protein belongs to the PsbE/PsbF family.

The protein localises to the membrane. Unknown. Resembles PsbF, one of the subunits of the photosystem II reaction center. However, it encodes asparagine rather than histidine at the site PsbF uses to bind heme. This chain is PsbF-like protein, found in Prochlorococcus marinus (strain MIT 9312).